The chain runs to 335 residues: Mesoderm-specific transcript homolog protein (335 aa).

The next 3 membrane-spanning stretches (helical) occupy residues 13–33 (WWVQ…HIPP), 88–108 (IWEG…LGFG), and 266–286 (VGAL…LDPV). Residues 71-310 (IVVLLHGFPT…PRSTVSILDD (240 aa)) enclose the AB hydrolase-1 domain. The RVIALD signature appears at 98-103 (RVIALD).

Belongs to the AB hydrolase superfamily. In terms of tissue distribution, no detectable transcripts during preimplantation development. Isoform 1 was not detected in either in vitro-matured oocytes (IVF) or parthenogenetically activated (PA) blastocyst. Isoform 2 was expressed in IVF and PA blastocysts.

The protein localises to the endoplasmic reticulum membrane. This chain is Mesoderm-specific transcript homolog protein (MEST), found in Bos taurus (Bovine).